A 372-amino-acid polypeptide reads, in one-letter code: VTKAVENINAIIAPALKGMDPVKQAEIDQKMKDLDGTDNKGKLGANAILAVSMAVCKAGAAEKGVPLYKHIADLAGNSKLILPVPSFNIINGGSHAGNALAMQEFMILPVGASSFSEAMRMGCEVYHALKGLIKAKYGQDACNVGDEGGFAPNIGSNDEGLNLVNEAIEKAGYTGKVKIGMDVASSEFYTEDGMYDLDFKNQPNDGSQKKTKEQMLELYNEFCKKYPVISIEDPFEQDDWEPCAKLTTENICQVVGDDILVTNPVRVKKAIDAKAVNALLLKVNQIGTITESIEAVRMAKEAGWGVMTSHRSGETEDSFIADLAVGLASGQIKTGAPCRSERNAKYNQLLRIEEELGENAVYAGESWRHIGW.

2 residues coordinate substrate: His95 and Glu104. Residue Glu147 is the Proton donor of the active site. Residues Asp182, Glu232, and Asp257 each coordinate Mg(2+). Substrate-binding residues include Glu232 and Asp257. Residue Lys282 is the Proton acceptor of the active site. Substrate-binding positions include 309-312 and Lys333; that span reads SHRS.

The protein belongs to the enolase family. Homodimer. Requires Mg(2+) as cofactor.

The protein resides in the cytoplasm. The catalysed reaction is (2R)-2-phosphoglycerate = phosphoenolpyruvate + H2O. The protein operates within carbohydrate degradation; glycolysis; pyruvate from D-glyceraldehyde 3-phosphate: step 4/5. The chain is Enolase (ENO) from Chlamydomonas reinhardtii (Chlamydomonas smithii).